Consider the following 466-residue polypeptide: Methylenomycin A resistance protein (466 aa).

14 helical membrane-spanning segments follow: residues 16–36 (ISVL…VTVV), 56–76 (WVVD…GALA), 83–103 (TIYI…AASI), 113–133 (LIQG…LAAS), 146–166 (LWAA…GVLV), 168–188 (LAGW…ALIS), 203–223 (VNII…YALI), 234–254 (VILV…LREI), 276–296 (FIGF…SLFL), 305–325 (FMAG…NLLF), 337–357 (LMFV…VLIS), 367–387 (VLMS…TTVI), 409–429 (IGAL…ATWY), and 434–454 (FAFL…WLFL).

This sequence belongs to the major facilitator superfamily. EmrB family.

It localises to the cell membrane. Resistance to the epoxide antibiotic methylenomycin. The polypeptide is Methylenomycin A resistance protein (mmr) (Bacillus subtilis (strain 168)).